Reading from the N-terminus, the 281-residue chain is Elongation factor 1-delta (281 aa).

Ala2 is modified (N-acetylalanine). Residue Lys17 is modified to N6-acetyllysine. Ser37, Ser44, Ser60, Ser86, and Ser106 each carry phosphoserine. The segment at 80 to 115 is leucine-zipper; the sequence is LVVRIASLEVENQSLRGVVQELQQAISKLEARLNVL. The residue at position 107 (Lys107) is an N6-acetyllysine. Lys117 bears the N6-acetyllysine; alternate mark. Lys117 carries the post-translational modification N6-succinyllysine; alternate. The segment at 118-172 is disordered; that stretch reads SSPGHRATAPQTQHVSPMRQVEPPAKKPATPAEDDEDDDIDLFGSDNEEEDKEAA. Ser119 is subject to Phosphoserine. The residue at position 129 (Thr129) is a Phosphothreonine. Ser133 is modified (phosphoserine). Phosphothreonine is present on Thr147. A compositionally biased stretch (acidic residues) spans 149-169; it reads AEDDEDDDIDLFGSDNEEEDK. Ser162 bears the Phosphoserine; by CK2 mark. The segment at 173–281 is catalytic (GEF); it reads QLREERLRQY…SVDIAAFNKI (109 aa).

It belongs to the EF-1-beta/EF-1-delta family. In terms of assembly, EF-1 is composed of 4 subunits: alpha, beta, delta isoform 1, and gamma. Isoform 2 interacts with HSF1 and NFE2L2.

It is found in the nucleus. Functionally, EF-1-beta and EF-1-delta stimulate the exchange of GDP bound to EF-1-alpha to GTP, regenerating EF-1-alpha for another round of transfer of aminoacyl-tRNAs to the ribosome. Its function is as follows. Regulates induction of heat-shock-responsive genes through association with heat shock transcription factors and direct DNA-binding at heat shock promoter elements (HSE). The polypeptide is Elongation factor 1-delta (EEF1D) (Macaca fascicularis (Crab-eating macaque)).